Consider the following 600-residue polypeptide: Proline--tRNA ligase (600 aa).

It belongs to the class-II aminoacyl-tRNA synthetase family. ProS type 1 subfamily. In terms of assembly, homodimer.

The protein resides in the cytoplasm. The catalysed reaction is tRNA(Pro) + L-proline + ATP = L-prolyl-tRNA(Pro) + AMP + diphosphate. Catalyzes the attachment of proline to tRNA(Pro) in a two-step reaction: proline is first activated by ATP to form Pro-AMP and then transferred to the acceptor end of tRNA(Pro). As ProRS can inadvertently accommodate and process non-cognate amino acids such as alanine and cysteine, to avoid such errors it has two additional distinct editing activities against alanine. One activity is designated as 'pretransfer' editing and involves the tRNA(Pro)-independent hydrolysis of activated Ala-AMP. The other activity is designated 'posttransfer' editing and involves deacylation of mischarged Ala-tRNA(Pro). The misacylated Cys-tRNA(Pro) is not edited by ProRS. This chain is Proline--tRNA ligase, found in Synechococcus elongatus (strain ATCC 33912 / PCC 7942 / FACHB-805) (Anacystis nidulans R2).